We begin with the raw amino-acid sequence, 342 residues long: tRNA N6-adenosine threonylcarbamoyltransferase (342 aa).

His111 and His115 together coordinate Fe cation. Residues 133-137 (VVSGG), Asp166, Gly179, Asp183, and Asn273 each bind substrate. Fe cation is bound at residue Asp301.

Belongs to the KAE1 / TsaD family. Fe(2+) is required as a cofactor.

Its subcellular location is the cytoplasm. The catalysed reaction is L-threonylcarbamoyladenylate + adenosine(37) in tRNA = N(6)-L-threonylcarbamoyladenosine(37) in tRNA + AMP + H(+). Required for the formation of a threonylcarbamoyl group on adenosine at position 37 (t(6)A37) in tRNAs that read codons beginning with adenine. Is involved in the transfer of the threonylcarbamoyl moiety of threonylcarbamoyl-AMP (TC-AMP) to the N6 group of A37, together with TsaE and TsaB. TsaD likely plays a direct catalytic role in this reaction. This chain is tRNA N6-adenosine threonylcarbamoyltransferase, found in Trichlorobacter lovleyi (strain ATCC BAA-1151 / DSM 17278 / SZ) (Geobacter lovleyi).